Here is a 116-residue protein sequence, read N- to C-terminus: Ribonuclease P protein component (116 aa).

It belongs to the RnpA family. As to quaternary structure, consists of a catalytic RNA component (M1 or rnpB) and a protein subunit.

The enzyme catalyses Endonucleolytic cleavage of RNA, removing 5'-extranucleotides from tRNA precursor.. RNaseP catalyzes the removal of the 5'-leader sequence from pre-tRNA to produce the mature 5'-terminus. It can also cleave other RNA substrates such as 4.5S RNA. The protein component plays an auxiliary but essential role in vivo by binding to the 5'-leader sequence and broadening the substrate specificity of the ribozyme. The protein is Ribonuclease P protein component of Acholeplasma laidlawii (strain PG-8A).